Reading from the N-terminus, the 300-residue chain is 33 kDa chaperonin (300 aa).

Intrachain disulfides connect Cys235–Cys237 and Cys269–Cys272.

Belongs to the HSP33 family. Under oxidizing conditions two disulfide bonds are formed involving the reactive cysteines. Under reducing conditions zinc is bound to the reactive cysteines and the protein is inactive.

It localises to the cytoplasm. In terms of biological role, redox regulated molecular chaperone. Protects both thermally unfolding and oxidatively damaged proteins from irreversible aggregation. Plays an important role in the bacterial defense system toward oxidative stress. This Pseudomonas syringae pv. tomato (strain ATCC BAA-871 / DC3000) protein is 33 kDa chaperonin.